A 369-amino-acid polypeptide reads, in one-letter code: MLFPKRLIVWGVLLILSLSQFVLYLPATTCTNSKGLRLCAPQFTITVIGGSSTANEFIASVREFLRLISYLTIDMGWSNEFTDPSVYEDENLVDTFQPDKVFELNYFGFCKRSNKSKVYCTSNENYGMDVLEVLVRDVGIQLGNISTTRSNETKKFGDSLVLTYRLALTSIRDFLKHDKHTGNALSKALIGSPDPNVKGVSPTKNYLKGVNLAFILMMFNGMVFYFAVLEIIVGFLSICVVSAFGGALSVGKRHRLFPMLLKSSSSILVVIATLTILCNIVYLIALKTLEPEEVTDVGSDNAAVHTTGWELLKVNVGSGFIMGLARYAIQWVLLVLAFLAANHYKAKPKKSDKYTEDTSNSPSPDLMEK.

The Cytoplasmic portion of the chain corresponds to methionine 1–arginine 6. The helical transmembrane segment at leucine 7–alanine 27 threads the bilayer. The Lumenal segment spans residues threonine 28–asparagine 220. A helical membrane pass occupies residues glycine 221–valine 241. Residues serine 242 to serine 265 are Cytoplasmic-facing. The helical transmembrane segment at serine 266–leucine 286 threads the bilayer. Topologically, residues lysine 287 to glycine 319 are lumenal. A helical transmembrane segment spans residues phenylalanine 320–alanine 340. Topologically, residues alanine 341–lysine 369 are cytoplasmic. Residues proline 348–lysine 369 are disordered.

The protein belongs to the SMA2 family.

It is found in the prospore membrane. Its subcellular location is the endoplasmic reticulum. Its function is as follows. Involved in spore and ascus formation. Required for the efficient assembly of the precursors of the prospore membrane to a continuous prospore membrane. This is Spore membrane assembly protein 2 (SMA2) from Saccharomyces cerevisiae (strain ATCC 204508 / S288c) (Baker's yeast).